The sequence spans 525 residues: MRQQPRWKLYLVVLVALGSIYYALPSLLGGNLPSWMPNKVIHQGLDLQGGLYLLYDVKVEEAIKQAGNNMVDSARNLLRKERQRYRGIEQVGADQVVIRLTPNSDTERMLSVLKDELRESKVEHFQPEAQIRLTLGEAEKVEIRKFAVDQAIEIIRNRIDAFGVSEPSIQKQGERRIIVQLPGIKNPDRAKGLIGRTARLDFKLVNEKGDLNRALEGQVPADSELMYEERSANQGGKSAYPLLVFKRTILSGQHIQNAQTTFNEYNEPIVSVKFDAVGGRKFSQITGEHIKERLAIVLDGKVQSAPVIQDKIAGGRATISGSFTREEAHDLAIVLRAGALPAPLVILEERTVGPTLGADSVAQGLNSVLIGGVLVVLFMVLYYKGFGMLANLAVVLNVTILVSLLALMQATLTLPGIAGAVLLLGMAVDANVLIFERIREELRLGKSPLAAIDHGYSKAFSTILDANITTLITAVILYQFGTGPVRGFAVTLSVGLLASMFTAIFVTRVVLAEVVKNRRLKTLSI.

6 consecutive transmembrane segments (helical) span residues 9–29 (LYLV…SLLG), 368–388 (VLIG…GFGM), 392–412 (LAVV…QATL), 415–435 (PGIA…VLIF), 460–480 (FSTI…LYQF), and 487–507 (GFAV…IFVT).

Belongs to the SecD/SecF family. SecD subfamily. In terms of assembly, forms a complex with SecF. Part of the essential Sec protein translocation apparatus which comprises SecA, SecYEG and auxiliary proteins SecDF-YajC and YidC.

The protein resides in the cell inner membrane. In terms of biological role, part of the Sec protein translocase complex. Interacts with the SecYEG preprotein conducting channel. SecDF uses the proton motive force (PMF) to complete protein translocation after the ATP-dependent function of SecA. The sequence is that of Protein translocase subunit SecD from Magnetococcus marinus (strain ATCC BAA-1437 / JCM 17883 / MC-1).